A 595-amino-acid chain; its full sequence is Aspartate--tRNA(Asp/Asn) ligase (595 aa).

Residue glutamate 174 participates in L-aspartate binding. The aspartate stretch occupies residues 198-201 (QLFK). Arginine 220 is a binding site for L-aspartate. ATP contacts are provided by residues 220–222 (RDE) and glutamine 229. Histidine 456 contacts L-aspartate. Glutamate 486 contributes to the ATP binding site. Residue arginine 493 participates in L-aspartate binding. 538–541 (GFDR) serves as a coordination point for ATP.

The protein belongs to the class-II aminoacyl-tRNA synthetase family. Type 1 subfamily. Homodimer.

It localises to the cytoplasm. It carries out the reaction tRNA(Asx) + L-aspartate + ATP = L-aspartyl-tRNA(Asx) + AMP + diphosphate. In terms of biological role, aspartyl-tRNA synthetase with relaxed tRNA specificity since it is able to aspartylate not only its cognate tRNA(Asp) but also tRNA(Asn). Reaction proceeds in two steps: L-aspartate is first activated by ATP to form Asp-AMP and then transferred to the acceptor end of tRNA(Asp/Asn). The polypeptide is Aspartate--tRNA(Asp/Asn) ligase (Gloeobacter violaceus (strain ATCC 29082 / PCC 7421)).